A 388-amino-acid chain; its full sequence is Carbamoyl phosphate synthase small chain (388 aa).

The segment at 1–194 is CPSase; sequence MAQNPLSKPT…WPEGYARQEA (194 aa). The L-glutamine site is built by S53, G246, and G248. The region spanning 198-387 is the Glutamine amidotransferase type-1 domain; that stretch reads KVVAIDYGAK…AAAMDAQKAE (190 aa). Catalysis depends on C276, which acts as the Nucleophile. 5 residues coordinate L-glutamine: L277, Q280, N318, G320, and F321. Active-site residues include H360 and E362.

This sequence belongs to the CarA family. As to quaternary structure, composed of two chains; the small (or glutamine) chain promotes the hydrolysis of glutamine to ammonia, which is used by the large (or ammonia) chain to synthesize carbamoyl phosphate. Tetramer of heterodimers (alpha,beta)4.

It carries out the reaction hydrogencarbonate + L-glutamine + 2 ATP + H2O = carbamoyl phosphate + L-glutamate + 2 ADP + phosphate + 2 H(+). It catalyses the reaction L-glutamine + H2O = L-glutamate + NH4(+). It participates in amino-acid biosynthesis; L-arginine biosynthesis; carbamoyl phosphate from bicarbonate: step 1/1. It functions in the pathway pyrimidine metabolism; UMP biosynthesis via de novo pathway; (S)-dihydroorotate from bicarbonate: step 1/3. In terms of biological role, small subunit of the glutamine-dependent carbamoyl phosphate synthetase (CPSase). CPSase catalyzes the formation of carbamoyl phosphate from the ammonia moiety of glutamine, carbonate, and phosphate donated by ATP, constituting the first step of 2 biosynthetic pathways, one leading to arginine and/or urea and the other to pyrimidine nucleotides. The small subunit (glutamine amidotransferase) binds and cleaves glutamine to supply the large subunit with the substrate ammonia. The chain is Carbamoyl phosphate synthase small chain from Ruegeria pomeroyi (strain ATCC 700808 / DSM 15171 / DSS-3) (Silicibacter pomeroyi).